The chain runs to 379 residues: Glutamate 5-kinase (379 aa).

Lys-15 serves as a coordination point for ATP. Positions 56, 143, and 155 each coordinate substrate. Position 175 to 176 (175 to 176 (SD)) interacts with ATP. One can recognise a PUA domain in the interval 281 to 358 (KGTLTIDAGA…CDAAQILGIS (78 aa)).

This sequence belongs to the glutamate 5-kinase family.

The protein localises to the cytoplasm. It catalyses the reaction L-glutamate + ATP = L-glutamyl 5-phosphate + ADP. It participates in amino-acid biosynthesis; L-proline biosynthesis; L-glutamate 5-semialdehyde from L-glutamate: step 1/2. Functionally, catalyzes the transfer of a phosphate group to glutamate to form L-glutamate 5-phosphate. The chain is Glutamate 5-kinase from Nitrobacter hamburgensis (strain DSM 10229 / NCIMB 13809 / X14).